The primary structure comprises 510 residues: Cytochrome P450 monooxygenase ptmK (510 aa).

The helical transmembrane segment at 2–22 (IIVTFFWVGIVLSAIWTFYKV) threads the bilayer. N-linked (GlcNAc...) asparagine glycans are attached at residues Asn313, Asn408, and Asn443. Cys456 serves as a coordination point for heme.

This sequence belongs to the cytochrome P450 family. Heme is required as a cofactor.

The protein resides in the membrane. Its pathway is secondary metabolite biosynthesis. Functionally, cytochrome P450 monooxygenase; part of the gene cluster that mediates the biosynthesis of the indole diterpenes penitrems. The geranylgeranyl diphosphate (GGPP) synthase ptmG catalyzes the first step in penitrem biosynthesis via conversion of farnesyl pyrophosphate and isopentyl pyrophosphate into geranylgeranyl pyrophosphate (GGPP). Condensation of indole-3-glycerol phosphate with GGPP by the prenyl transferase ptmC then forms 3-geranylgeranylindole (3-GGI). Epoxidation by the FAD-dependent monooxygenase ptmM leads to a epoxidized-GGI that is substrate of the terpene cyclase ptmB for cyclization to yield paspaline. Paspaline is subsequently converted to 13-desoxypaxilline by the cytochrome P450 monooxygenase ptmP, the latter being then converted to paxilline by the cytochrome P450 monooxygenase ptmQ. Paxilline is converted to beta-paxitriol via C-10 ketoreduction by the short-chain dehydrogenase ptmH which can be monoprenylated at the C-20 by the indole diterpene prenyltransferase ptmD. A two-step elimination (acetylation and elimination) process performed by the O-acetyltransferase ptmV and ptmI leads to the production of the prenylated form of penijanthine. The FAD-linked oxidoreductase ptmO then converts the prenylated form of penijanthine into PC-M5 which is in turn transformed into PC-M4 by the aromatic dimethylallyltransferase ptmE. Five sequential oxidative transformations performed by the cytochrome P450 monooxygenases ptmK, ptmU, ptmL, ptmN and ptmJ yield the various penitrem compounds. PtmK, ptmU and ptmM are involved in the formation of the key bicyclic ring of penitrem C via the formation of the intermediates secopenitrem D and penitrem D. PtmL catalyzes the epoxidation of penitrem D and C to yield penitrem B and F, respectively. PtmJ catalyzes the last benzylic hydroxylation to convert penitrem B to prenitrem E and penitrem F to penitrem A. The chain is Cytochrome P450 monooxygenase ptmK from Penicillium ochrochloron.